A 296-amino-acid chain; its full sequence is Nucleotide-binding protein SSA_0810 (296 aa).

13–20 (GMSGAGKT) provides a ligand contact to ATP. 63-66 (DMRS) contributes to the GTP binding site. The interval 277–296 (WPVNSSHRDKNRRKETVNRS) is disordered. The span at 282–296 (SHRDKNRRKETVNRS) shows a compositional bias: basic and acidic residues.

It belongs to the RapZ-like family.

Functionally, displays ATPase and GTPase activities. The protein is Nucleotide-binding protein SSA_0810 of Streptococcus sanguinis (strain SK36).